The chain runs to 291 residues: 4,5:9,10-diseco-3-hydroxy-5,9,17-trioxoandrosta-1(10),2-diene-4-oate hydrolase (291 aa).

Substrate-binding positions include 45 to 46 (GG), Asn-54, Asn-113, Leu-115, and Arg-192. His-269 acts as the Proton acceptor in catalysis. Position 270 (Trp-270) interacts with substrate.

This sequence belongs to the AB hydrolase superfamily. HsaD family. As to quaternary structure, homodimer.

The enzyme catalyses (1E,2Z)-3-hydroxy-5,9,17-trioxo-4,5:9,10-disecoandrosta-1(10),2-dien-4-oate + H2O = 3-[(3aS,4S,7aS)-7a-methyl-1,5-dioxo-octahydro-1H-inden-4-yl]propanoate + (2Z,4Z)-2-hydroxyhexa-2,4-dienoate + H(+). The catalysed reaction is 2,6-dioxo-6-phenylhexa-3-enoate + H2O = 2-oxopent-4-enoate + benzoate + H(+). Its pathway is lipid metabolism; steroid biosynthesis. In terms of biological role, catalyzes the hydrolysis of a carbon-carbon bond in 4,5: 9,10-diseco-3-hydroxy-5,9,17-trioxoandrosta-1(10),2-diene-4-oate (4,9-DSHA) to yield 9,17-dioxo-1,2,3,4,10,19-hexanorandrostan-5-oate (DOHNAA) and 2-hydroxy-hexa-2,4-dienoate (HHD). Is also able to catalyze the hydrolysis of 2-hydroxy-6-oxo-6-phenylhexa-2,4-dienoic acid (HOPDA) and the synthetic analog 8-(2-chlorophenyl)-2-hydroxy-5-methyl-6-oxoocta-2,4-dienoic acid (HOPODA). The sequence is that of 4,5:9,10-diseco-3-hydroxy-5,9,17-trioxoandrosta-1(10),2-diene-4-oate hydrolase (hsaD) from Mycobacterium tuberculosis (strain ATCC 25618 / H37Rv).